We begin with the raw amino-acid sequence, 125 residues long: Small ribosomal subunit protein bS6 (125 aa).

Residues 99-125 form a disordered region; the sequence is ASPMVKAKDERRASAEVENNDFEDAEE. A compositionally biased stretch (basic and acidic residues) spans 104–113; sequence KAKDERRASA. Residues 116-125 are compositionally biased toward acidic residues; that stretch reads ENNDFEDAEE.

This sequence belongs to the bacterial ribosomal protein bS6 family.

Binds together with bS18 to 16S ribosomal RNA. In Mannheimia succiniciproducens (strain KCTC 0769BP / MBEL55E), this protein is Small ribosomal subunit protein bS6.